Here is a 393-residue protein sequence, read N- to C-terminus: Riboflavin biosynthesis protein RibBA (393 aa).

Residues 1–200 (MQFDTIELAI…IKSLVAFRKA (200 aa)) form a DHBP synthase region. Residues 27 to 28 (RE), Asp32, 139 to 143 (RNGHT), and Glu163 each bind D-ribulose 5-phosphate. Glu28 is a binding site for Mg(2+). His142 provides a ligand contact to Mg(2+). A GTP cyclohydrolase II region spans residues 201–393 (VELNVNLKAK…TKKNKMGHLI (193 aa)). 249-253 (RMHSA) serves as a coordination point for GTP. Zn(2+) is bound by residues Cys254, Cys265, and Cys267. Residues Gln270, 291–293 (EGR), and Thr313 each bind GTP. The Proton acceptor; for GTP cyclohydrolase activity role is filled by Asp325. Arg327 (nucleophile; for GTP cyclohydrolase activity) is an active-site residue. GTP-binding residues include Ser348 and Lys353.

In the N-terminal section; belongs to the DHBP synthase family. This sequence in the C-terminal section; belongs to the GTP cyclohydrolase II family. Mg(2+) is required as a cofactor. Mn(2+) serves as cofactor. It depends on Zn(2+) as a cofactor.

It carries out the reaction D-ribulose 5-phosphate = (2S)-2-hydroxy-3-oxobutyl phosphate + formate + H(+). The catalysed reaction is GTP + 4 H2O = 2,5-diamino-6-hydroxy-4-(5-phosphoribosylamino)-pyrimidine + formate + 2 phosphate + 3 H(+). The protein operates within cofactor biosynthesis; riboflavin biosynthesis; 2-hydroxy-3-oxobutyl phosphate from D-ribulose 5-phosphate: step 1/1. Its pathway is cofactor biosynthesis; riboflavin biosynthesis; 5-amino-6-(D-ribitylamino)uracil from GTP: step 1/4. Its function is as follows. Catalyzes the conversion of D-ribulose 5-phosphate to formate and 3,4-dihydroxy-2-butanone 4-phosphate. In terms of biological role, catalyzes the conversion of GTP to 2,5-diamino-6-ribosylamino-4(3H)-pyrimidinone 5'-phosphate (DARP), formate and pyrophosphate. This chain is Riboflavin biosynthesis protein RibBA, found in Staphylococcus epidermidis (strain ATCC 35984 / DSM 28319 / BCRC 17069 / CCUG 31568 / BM 3577 / RP62A).